The sequence spans 440 residues: Transposon Ty1-LR2 Gag polyprotein (440 aa).

Polar residues-rich tracts occupy residues 1–23, 48–60, and 127–152; these read MESQQLSQHSPISHGSACASVTS, TKANSQQTTTPAS, and QSQFPQYPSSVGTPLSTPSPESGNTF. 3 disordered regions span residues 1 to 93, 126 to 174, and 352 to 440; these read MESQ…MMTQ, PQSQ…PPPM, and GSRN…PGTY. A compositionally biased stretch (low complexity) spans 153-165; it reads TDSSSADSDMTST. An RNA-binding region spans residues 299–401; it reads NNGIHINNKV…NSKSKTARAH (103 aa). The segment covering 402 to 418 has biased composition (low complexity); the sequence is NVSTSNNSPSTDNDSIS. Residue serine 416 is modified to Phosphoserine. Residues 419 to 428 are compositionally biased toward polar residues; sequence KSTTEPIQLN. Residues 429–440 are compositionally biased toward basic and acidic residues; it reads NKHDLHLRPGTY.

As to quaternary structure, homotrimer.

The protein localises to the cytoplasm. Functionally, capsid protein (CA) is the structural component of the virus-like particle (VLP), forming the shell that encapsulates the retrotransposons dimeric RNA genome. The particles are assembled from trimer-clustered units and there are holes in the capsid shells that allow for the diffusion of macromolecules. CA also has nucleocapsid-like chaperone activity, promoting primer tRNA(i)-Met annealing to the multipartite primer-binding site (PBS), dimerization of Ty1 RNA and initiation of reverse transcription. The sequence is that of Transposon Ty1-LR2 Gag polyprotein (TY1A-LR2) from Saccharomyces cerevisiae (strain ATCC 204508 / S288c) (Baker's yeast).